The chain runs to 290 residues: Phosphatidylglycerol--prolipoprotein diacylglyceryl transferase (290 aa).

7 helical membrane passes run 21–41, 60–80, 96–116, 130–150, 198–218, 225–245, and 258–278; these read VSLH…MWLA, LLYA…VLFY, WDGG…MFWF, FIAP…FING, SQLY…NLFI, GAVS…VEAF, and VISM…IMMI. Residue Arg143 coordinates a 1,2-diacyl-sn-glycero-3-phospho-(1'-sn-glycerol).

Belongs to the Lgt family.

It is found in the cell inner membrane. The catalysed reaction is L-cysteinyl-[prolipoprotein] + a 1,2-diacyl-sn-glycero-3-phospho-(1'-sn-glycerol) = an S-1,2-diacyl-sn-glyceryl-L-cysteinyl-[prolipoprotein] + sn-glycerol 1-phosphate + H(+). It participates in protein modification; lipoprotein biosynthesis (diacylglyceryl transfer). Catalyzes the transfer of the diacylglyceryl group from phosphatidylglycerol to the sulfhydryl group of the N-terminal cysteine of a prolipoprotein, the first step in the formation of mature lipoproteins. The protein is Phosphatidylglycerol--prolipoprotein diacylglyceryl transferase of Serratia proteamaculans (strain 568).